We begin with the raw amino-acid sequence, 262 residues long: Putative ABC transporter ATP-binding protein SAV_3608 (262 aa).

Positions 18–248 (LDVAGLAFAY…DTLMRAHRLE (231 aa)) constitute an ABC transporter domain. 51–58 (GPNGAGKT) is a binding site for ATP.

It belongs to the ABC transporter superfamily.

The protein resides in the cell membrane. Its function is as follows. Probably part of an ABC transporter complex. Responsible for energy coupling to the transport system. This Streptomyces avermitilis (strain ATCC 31267 / DSM 46492 / JCM 5070 / NBRC 14893 / NCIMB 12804 / NRRL 8165 / MA-4680) protein is Putative ABC transporter ATP-binding protein SAV_3608.